The chain runs to 690 residues: Highly divergent homeobox (690 aa).

The segment at residues 3–63 (LRSVFTVEQQ…NKRRKMSSKN (61 aa)) is a DNA-binding region (homeobox 1). Disordered stretches follow at residues 55–76 (KRRK…TSLS) and 112–132 (SPAS…QITE). Over residues 64–76 (SESGTATTGTSLS) the composition is skewed to low complexity. The segment covering 113–123 (PASSSSRQGTN) has biased composition (polar residues). Residues Lys135, Lys140, Lys144, Lys163, Lys172, Lys194, Lys212, Lys221, and Lys232 each participate in a glycyl lysine isopeptide (Lys-Gly) (interchain with G-Cter in SUMO2) cross-link. A DNA-binding region (homeobox 2) is located at residues 435–498 (ALQDRTQFSD…NRRRKYRLMG (64 aa)). The interval 501 to 539 (VPPPRGGPADFSEQPESGSLSALTPGEEAGPEVGEDNDR) is disordered. A Glycyl lysine isopeptide (Lys-Gly) (interchain with G-Cter in SUMO2) cross-link involves residue Lys613. Positions 664–690 (FNHASLEPDDTSFSVSSLSEKNVSESL) are disordered. The span at 674 to 690 (TSFSVSSLSEKNVSESL) shows a compositional bias: polar residues.

Its subcellular location is the nucleus. In Homo sapiens (Human), this protein is Highly divergent homeobox (HDX).